A 458-amino-acid chain; its full sequence is Cysteine--tRNA ligase (458 aa).

Position 29 (cysteine 29) interacts with Zn(2+). The 'HIGH' region motif lies at 31–41; it reads PTVYDNPHIGN. Zn(2+) is bound by residues cysteine 214, histidine 239, and glutamate 243. Positions 272–276 match the 'KMSKS' region motif; it reads KMSKS. Lysine 275 serves as a coordination point for ATP.

It belongs to the class-I aminoacyl-tRNA synthetase family. As to quaternary structure, monomer. Zn(2+) is required as a cofactor.

It is found in the cytoplasm. The enzyme catalyses tRNA(Cys) + L-cysteine + ATP = L-cysteinyl-tRNA(Cys) + AMP + diphosphate. This is Cysteine--tRNA ligase from Rickettsia bellii (strain OSU 85-389).